A 536-amino-acid chain; its full sequence is MEELGVNNSRLGIETIGLGKAANVHYNLLPAALYEHAIRNGEAVLTADGALLAETGQHTGRSPKDKFILRDANTDSQIWWDNNKPMSKEHFDILHQDMLAHVAGKTLFVQDLIGGADAANALPTRVVTELAWHSLFIRNLLIRPERAALADFEAKFTIIDLPSFKADPARHGCRTETVIACDFTNNIVLIAGTYYAGEMKKSVFTALNYMLPAKQVMPMHCSANVGPAGDSAVFFGLSGTGKTTLSADPARTLIGDDEHGWGEDGIFNFEGGCYAKTIRLSAEAEPEIYATTKRFGTVLENVVLDENRVPDFNDGSKTENTRCAYPLNFIPNASPTGRAGHPKTIIMLTADAFGVMPPIAKLTPEQAMYHFLSGYTAKVAGTERGVTEPEATFSTCFGAPFMPRHPAEYGNLLKELIARHEVDCWLVNTGWTGGAYGVGNRMPIKATRALLTAALSGELKKVEFRTDANFGFAVPVSVEGVDTSILDPRSTWANGTDYDAQAKKLVGMFIANFEKFEAHVDSNVLDAAPVLAVAAQ.

3 residues coordinate substrate: Arg61, Tyr195, and Lys201. ATP is bound by residues Lys201, His220, and 236-244 (GLSGTGKTT). Mn(2+) contacts are provided by Lys201 and His220. Mn(2+) is bound at residue Asp257. ATP-binding residues include Glu285, Arg322, and Thr447. Arg322 provides a ligand contact to substrate.

The protein belongs to the phosphoenolpyruvate carboxykinase (ATP) family. Mn(2+) is required as a cofactor.

The protein localises to the cytoplasm. It catalyses the reaction oxaloacetate + ATP = phosphoenolpyruvate + ADP + CO2. It participates in carbohydrate biosynthesis; gluconeogenesis. Its function is as follows. Involved in the gluconeogenesis. Catalyzes the conversion of oxaloacetate (OAA) to phosphoenolpyruvate (PEP) through direct phosphoryl transfer between the nucleoside triphosphate and OAA. In Allorhizobium ampelinum (strain ATCC BAA-846 / DSM 112012 / S4) (Agrobacterium vitis (strain S4)), this protein is Phosphoenolpyruvate carboxykinase (ATP).